The chain runs to 459 residues: ATP synthase subunit beta (459 aa).

Residue 148 to 155 (GGAGVGKT) coordinates ATP.

The protein belongs to the ATPase alpha/beta chains family. In terms of assembly, F-type ATPases have 2 components, CF(1) - the catalytic core - and CF(0) - the membrane proton channel. CF(1) has five subunits: alpha(3), beta(3), gamma(1), delta(1), epsilon(1). CF(0) has three main subunits: a(1), b(2) and c(9-12). The alpha and beta chains form an alternating ring which encloses part of the gamma chain. CF(1) is attached to CF(0) by a central stalk formed by the gamma and epsilon chains, while a peripheral stalk is formed by the delta and b chains.

The protein resides in the cell inner membrane. The catalysed reaction is ATP + H2O + 4 H(+)(in) = ADP + phosphate + 5 H(+)(out). Its function is as follows. Produces ATP from ADP in the presence of a proton gradient across the membrane. The catalytic sites are hosted primarily by the beta subunits. The chain is ATP synthase subunit beta from Thiobacillus denitrificans (strain ATCC 25259 / T1).